Here is a 506-residue protein sequence, read N- to C-terminus: D-alanine--D-alanyl carrier protein ligase (506 aa).

152-153 (TS) is an ATP binding site. Aspartate 197 contributes to the D-alanine binding site. Residue 292–297 (NTYGPT) participates in ATP binding. Valine 301 is a D-alanine binding site. Residues aspartate 383, 395-398 (YRGR), and lysine 494 each bind ATP. Residue lysine 494 coordinates D-alanine.

The protein belongs to the ATP-dependent AMP-binding enzyme family. DltA subfamily.

It is found in the cytoplasm. It carries out the reaction holo-[D-alanyl-carrier protein] + D-alanine + ATP = D-alanyl-[D-alanyl-carrier protein] + AMP + diphosphate. The protein operates within cell wall biogenesis; lipoteichoic acid biosynthesis. Catalyzes the first step in the D-alanylation of lipoteichoic acid (LTA), the activation of D-alanine and its transfer onto the D-alanyl carrier protein (Dcp) DltC. In an ATP-dependent two-step reaction, forms a high energy D-alanyl-AMP intermediate, followed by transfer of the D-alanyl residue as a thiol ester to the phosphopantheinyl prosthetic group of the Dcp. D-alanylation of LTA plays an important role in modulating the properties of the cell wall in Gram-positive bacteria, influencing the net charge of the cell wall. In Lacticaseibacillus paracasei (strain ATCC 334 / BCRC 17002 / CCUG 31169 / CIP 107868 / KCTC 3260 / NRRL B-441) (Lactobacillus paracasei), this protein is D-alanine--D-alanyl carrier protein ligase.